The sequence spans 240 residues: tRNA (guanine-N(1)-)-methyltransferase (240 aa).

S-adenosyl-L-methionine is bound by residues Gly111 and 130–135 (IGDYVI).

The protein belongs to the RNA methyltransferase TrmD family. Homodimer.

The protein resides in the cytoplasm. The enzyme catalyses guanosine(37) in tRNA + S-adenosyl-L-methionine = N(1)-methylguanosine(37) in tRNA + S-adenosyl-L-homocysteine + H(+). Specifically methylates guanosine-37 in various tRNAs. The protein is tRNA (guanine-N(1)-)-methyltransferase of Mycoplasma mycoides subsp. mycoides SC (strain CCUG 32753 / NCTC 10114 / PG1).